A 396-amino-acid polypeptide reads, in one-letter code: S-arrestin (396 aa).

The protein belongs to the arrestin family.

Its function is as follows. Arrestin is one of the major proteins of the ros (retinal rod outer segments); it binds to photoactivated-phosphorylated rhodopsin, thereby apparently preventing the transducin-mediated activation of phosphodiesterase. This chain is S-arrestin, found in Aquarana catesbeiana (American bullfrog).